Reading from the N-terminus, the 529-residue chain is Cytochrome P450 monooxygenase CLM2 (529 aa).

Residues 2–19 (LLIIVVLVGTLIYFLSFH) traverse the membrane as a helical segment. N-linked (GlcNAc...) asparagine glycosylation is found at Asn244 and Asn281. Residue Cys438 coordinates heme.

It belongs to the cytochrome P450 family. Heme serves as cofactor.

The protein localises to the membrane. The catalysed reaction is (-)-longiborneol + reduced [NADPH--hemoprotein reductase] + O2 = culmorin + oxidized [NADPH--hemoprotein reductase] + H2O + H(+). It participates in mycotoxin biosynthesis. In terms of biological role, cytochrome P450 monooxygenase involved in the biosynthesis of culmorin, a tricyclic sesquiterpene diol reported to have antifungal activity and some phytotoxicity to wheat coleoptile tissue, contributing to Fusarium head blight disease. The terpene cyclase CLM1 is responsible for the cyclization of farnesyl diphosphate into the intermediate longiborneol. Longiborneol is then hydroxylated in a regio- and endo-stereoselective manner at position C-11 by the cytochrome P450 monooxygenase CLM2 to produce culmorin. Additional non-specific oxygenases are also able to hydroxylate longiborneol at other sites than C-11 leading to 3-hydroxylongiborneol, 5-hydroxylongiborneol, 12-hydroxylongiborneol and 15-hydroxylongiborneol. Moreover, another oxygenase capable of installing a C-11 exo-hydroxy group in longiborneol can also yield 11-epi-acetylculmorin. The production of these longiborneol derivatives is dwarfed by the high abundance of culmorin, suggesting that CLM2 displays superior enzymatic activity to the unidentified, possibly promiscuous, additional oxygenases. The protein is Cytochrome P450 monooxygenase CLM2 of Gibberella zeae (strain ATCC MYA-4620 / CBS 123657 / FGSC 9075 / NRRL 31084 / PH-1) (Wheat head blight fungus).